Reading from the N-terminus, the 324-residue chain is Biotin synthase 1 (324 aa).

The Radical SAM core domain occupies 37–256 (NAIETASLLS…VALARILMPA (220 aa)). Residues Cys-52, Cys-56, and Cys-59 each coordinate [4Fe-4S] cluster. Residues Cys-96, Cys-127, Cys-187, and Arg-260 each coordinate [2Fe-2S] cluster.

It belongs to the radical SAM superfamily. Biotin synthase family. Homodimer. [4Fe-4S] cluster is required as a cofactor. Requires [2Fe-2S] cluster as cofactor.

The catalysed reaction is (4R,5S)-dethiobiotin + (sulfur carrier)-SH + 2 reduced [2Fe-2S]-[ferredoxin] + 2 S-adenosyl-L-methionine = (sulfur carrier)-H + biotin + 2 5'-deoxyadenosine + 2 L-methionine + 2 oxidized [2Fe-2S]-[ferredoxin]. The protein operates within cofactor biosynthesis; biotin biosynthesis; biotin from 7,8-diaminononanoate: step 2/2. Catalyzes the conversion of dethiobiotin (DTB) to biotin by the insertion of a sulfur atom into dethiobiotin via a radical-based mechanism. This Paracoccus denitrificans (strain Pd 1222) protein is Biotin synthase 1.